A 369-amino-acid chain; its full sequence is Probable dual-specificity RNA methyltransferase RlmN (369 aa).

Glu108 acts as the Proton acceptor in catalysis. The Radical SAM core domain maps to 114–351 (YPDRATLCIS…IAQGVSCTVR (238 aa)). An intrachain disulfide couples Cys121 to Cys362. Residues Cys128, Cys132, and Cys135 each contribute to the [4Fe-4S] cluster site. S-adenosyl-L-methionine is bound by residues 183-184 (GE), Ser217, 240-242 (SLH), and Asn319. Cys362 serves as the catalytic S-methylcysteine intermediate.

It belongs to the radical SAM superfamily. RlmN family. It depends on [4Fe-4S] cluster as a cofactor.

It localises to the cytoplasm. The enzyme catalyses adenosine(2503) in 23S rRNA + 2 reduced [2Fe-2S]-[ferredoxin] + 2 S-adenosyl-L-methionine = 2-methyladenosine(2503) in 23S rRNA + 5'-deoxyadenosine + L-methionine + 2 oxidized [2Fe-2S]-[ferredoxin] + S-adenosyl-L-homocysteine. The catalysed reaction is adenosine(37) in tRNA + 2 reduced [2Fe-2S]-[ferredoxin] + 2 S-adenosyl-L-methionine = 2-methyladenosine(37) in tRNA + 5'-deoxyadenosine + L-methionine + 2 oxidized [2Fe-2S]-[ferredoxin] + S-adenosyl-L-homocysteine. Functionally, specifically methylates position 2 of adenine 2503 in 23S rRNA and position 2 of adenine 37 in tRNAs. The chain is Probable dual-specificity RNA methyltransferase RlmN from Rhodococcus erythropolis (strain PR4 / NBRC 100887).